Consider the following 474-residue polypeptide: 3-isopropylmalate dehydratase large subunit (474 aa).

3 residues coordinate [4Fe-4S] cluster: Cys-353, Cys-413, and Cys-416.

This sequence belongs to the aconitase/IPM isomerase family. LeuC type 1 subfamily. Heterodimer of LeuC and LeuD. [4Fe-4S] cluster serves as cofactor.

It catalyses the reaction (2R,3S)-3-isopropylmalate = (2S)-2-isopropylmalate. Its pathway is amino-acid biosynthesis; L-leucine biosynthesis; L-leucine from 3-methyl-2-oxobutanoate: step 2/4. Catalyzes the isomerization between 2-isopropylmalate and 3-isopropylmalate, via the formation of 2-isopropylmaleate. This is 3-isopropylmalate dehydratase large subunit from Roseiflexus sp. (strain RS-1).